Here is a 394-residue protein sequence, read N- to C-terminus: Dihydroorotase (394 aa).

Zn(2+)-binding residues include histidine 15, histidine 17, lysine 98, histidine 135, histidine 175, and aspartate 245. Position 98 is an N6-carboxylysine (lysine 98).

Belongs to the metallo-dependent hydrolases superfamily. DHOase family. Class II DHOase subfamily. Requires Zn(2+) as cofactor.

The enzyme catalyses (S)-dihydroorotate + H2O = N-carbamoyl-L-aspartate + H(+). It participates in pyrimidine metabolism; UMP biosynthesis via de novo pathway; (S)-dihydroorotate from bicarbonate: step 3/3. The polypeptide is Dihydroorotase (PYR3) (Mycosarcoma maydis (Corn smut fungus)).